We begin with the raw amino-acid sequence, 422 residues long: Dipeptidase aclJ (422 aa).

A helical transmembrane segment spans residues 28–45 (LAYSVTLTLVALFFTFAL). H77 and D79 together coordinate Zn(2+). N-linked (GlcNAc...) asparagine glycosylation is present at N96. C128 and C219 are joined by a disulfide. E190 lines the Zn(2+) pocket. H217 is a binding site for substrate. The N-linked (GlcNAc...) asparagine glycan is linked to N270. C287 and C319 form a disulfide bridge. 2 residues coordinate substrate: R291 and D351.

The protein belongs to the metallo-dependent hydrolases superfamily. Peptidase M19 family. The cofactor is Zn(2+).

It is found in the membrane. The enzyme catalyses an L-aminoacyl-L-amino acid + H2O = 2 an L-alpha-amino acid. It functions in the pathway mycotoxin biosynthesis. In terms of biological role, dipeptidase; part of the gene cluster that mediates the biosynthesis of aspirochlorine (or antibiotic A30641), an unusual halogenated spiro compound with distinctive antifungal properties due to selective inhibition of protein biosynthesis, and which is also active against bacteria, viruses, and murine tumor cells. The non-ribosomal peptide synthetase (NRPS) aclP is responsible the formation of the diketopiperazine (DKP) core from the condensation of 2 phenylalanine residues. One Phe residue is tailored into chlorotyrosine by hydroxylation and chlorination, whereas the second Phe undergoes an unprecedented C-C bond cleavage to be converted into glycine. After formation of the DKP, sulfur is incorporated into the DKP by conjugation with glutathione by aclG, followed by its stepwise degradation to the thiol by aclI, aclJ and aclK, and the dithiol oxidation by aclT. In addition, oxygenases (aclB, aclC, aclL and aclO) and O-methyltransferases (aclM and aclU) act as tailoring enzymes to produce the intermediate dechloroaspirochlorine. Ultimately, chlorination of dechloroaspirochlorine by the halogenase aclH is the last step in the aspirochlorine pathway. This is Dipeptidase aclJ from Aspergillus oryzae (strain ATCC 42149 / RIB 40) (Yellow koji mold).